Reading from the N-terminus, the 211-residue chain is FMN-dependent NADH:quinone oxidoreductase (211 aa).

FMN contacts are provided by residues Ser-10 and Ser-16 to Ser-18.

Belongs to the azoreductase type 1 family. In terms of assembly, homodimer. FMN is required as a cofactor.

It catalyses the reaction 2 a quinone + NADH + H(+) = 2 a 1,4-benzosemiquinone + NAD(+). The catalysed reaction is N,N-dimethyl-1,4-phenylenediamine + anthranilate + 2 NAD(+) = 2-(4-dimethylaminophenyl)diazenylbenzoate + 2 NADH + 2 H(+). Functionally, quinone reductase that provides resistance to thiol-specific stress caused by electrophilic quinones. Its function is as follows. Also exhibits azoreductase activity. Catalyzes the reductive cleavage of the azo bond in aromatic azo compounds to the corresponding amines. This Parafrankia sp. (strain EAN1pec) protein is FMN-dependent NADH:quinone oxidoreductase.